We begin with the raw amino-acid sequence, 327 residues long: Opticin (327 aa).

The first 19 residues, 1 to 19, serve as a signal peptide directing secretion; that stretch reads MKLPAFLSLLALVLLEAGT. 2 positions are modified to sulfotyrosine: Tyr61 and Tyr67. Residues 111 to 148 form the LRRNT domain; that stretch reads VLGSPNSHGLPTCLICVCLGSSVYCDDADLENIPPLPK. 7 LRR repeats span residues 149-170, 173-194, 197-218, 219-237, 243-263, 264-285, and 295-315; these read TTTY…DFKG, KLKR…ALRL, ALQD…PPAI, EVLD…QPEA, KLQF…PLPP, SLRS…AFCD, and WLED…PSAY. Cysteines 284 and 317 form a disulfide.

The protein belongs to the small leucine-rich proteoglycan (SLRP) family. SLRP class III subfamily. As to quaternary structure, homodimer. O-glycosylated. In terms of processing, proteolytically cleaved by MMP1, MMP2, MMP3, MMP7, MMP8, MMP9, ADAMTS4, and ADAMTS5. Proteolytically cleaved by MMP13. Post-translationally, sulfated on tyrosine residues. In terms of tissue distribution, ocular tissues, cartilage, ligament, skin, muscle and testes.

It localises to the secreted. The protein localises to the extracellular space. It is found in the extracellular matrix. Inhibits angiogenesis in the vitreous humor of the eye, and therefore represses neovascularization. Binds collagen fibrils. May be involved in collagen fiber organization via regulation of other members of the small leucine-rich repeat proteoglycan superfamily. This Canis lupus familiaris (Dog) protein is Opticin (OPTC).